The sequence spans 263 residues: Small ribosomal subunit protein bS1c (263 aa).

S1 motif domains lie at 27–96, 114–178, and 192–260; these read GDIV…LSIR, DSLL…LSHR, and GNII…LSMK.

It belongs to the bacterial ribosomal protein bS1 family.

It localises to the plastid. It is found in the chloroplast. The chain is Small ribosomal subunit protein bS1c (rps1) from Pyropia yezoensis (Susabi-nori).